The chain runs to 201 residues: Large ribosomal subunit protein uL4 (201 aa).

Residues 42 to 67 (GNSAQKTRSEVSGGGKKPWNQKGTGR) form a disordered region.

The protein belongs to the universal ribosomal protein uL4 family. As to quaternary structure, part of the 50S ribosomal subunit.

In terms of biological role, one of the primary rRNA binding proteins, this protein initially binds near the 5'-end of the 23S rRNA. It is important during the early stages of 50S assembly. It makes multiple contacts with different domains of the 23S rRNA in the assembled 50S subunit and ribosome. Forms part of the polypeptide exit tunnel. The protein is Large ribosomal subunit protein uL4 of Legionella pneumophila (strain Lens).